Reading from the N-terminus, the 373-residue chain is AA9 family lytic polysaccharide monooxygenase A (373 aa).

The first 20 residues, 1 to 20 (MKSSTFGMLALAAAAKLVSA), serve as a signal peptide directing secretion. H21 contributes to the Cu(2+) binding site. The interval 36 to 55 (EGNSQSGYIRSPPSNSPITD) is disordered. A disulfide bridge connects residues C63 and C183. H102 provides a ligand contact to Cu(2+). O2-binding residues include H169 and Q178. Y180 lines the Cu(2+) pocket. A disordered region spans residues 234–333 (GASGSSSSSS…NSVPQPSSNA (100 aa)). 2 stretches are compositionally biased toward low complexity: residues 235-262 (ASGS…APSS) and 270-323 (PATS…AAPT). Positions 324 to 333 (NSVPQPSSNA) are enriched in polar residues. A CBM1 domain is found at 335-371 (GAVKEWYQCGGLNYSGSTQCEEGLTCKKWNPYYHQCV). N347 carries N-linked (GlcNAc...) asparagine glycosylation.

This sequence belongs to the polysaccharide monooxygenase AA9 family. Cu(2+) serves as cofactor.

It localises to the secreted. The enzyme catalyses [(1-&gt;4)-beta-D-glucosyl]n+m + reduced acceptor + O2 = 4-dehydro-beta-D-glucosyl-[(1-&gt;4)-beta-D-glucosyl]n-1 + [(1-&gt;4)-beta-D-glucosyl]m + acceptor + H2O.. Its function is as follows. Lytic polysaccharide monooxygenase (LPMO) that depolymerizes crystalline and amorphous polysaccharides via the oxidation of scissile alpha- or beta-(1-4)-glycosidic bonds, yielding exclusively C4 oxidation products. Catalysis by LPMOs requires the reduction of the active-site copper from Cu(II) to Cu(I) by a reducing agent and H(2)O(2) or O(2) as a cosubstrate. In addition to cellulose, also cleaves the beta-(1!4)-glucan backbone of tamarind xyloglucan, but only next to unsubstituted glucosyl units. The sequence is that of AA9 family lytic polysaccharide monooxygenase A from Aspergillus tamarii.